A 184-amino-acid chain; its full sequence is Endothelial cell-specific molecule 1 (184 aa).

Residues 1–21 form the signal peptide; that stretch reads MKSLLLLTTLLVPLHLGMAWS. The IGFBP N-terminal domain maps to 24–102; that stretch reads YAVDCPEHCD…GDEFGICKDC (79 aa). 6 disulfides stabilise this stretch: C28–C51, C32–C53, C37–C54, C43–C57, C65–C83, and C77–C99. Residues 145–184 are disordered; sequence RTSASHTERDSASGDGNAVREEIGEGNAARPSVMKWLNPR. The segment covering 150–167 has biased composition (basic and acidic residues); it reads HTERDSASGDGNAVREEI. Residue S157 is glycosylated (O-linked (Xyl...) (chondroitin sulfate) serine).

O-glycosylated; contains chondroitin sulfate and dermatan sulfate.

It is found in the secreted. In terms of biological role, involved in angiogenesis; promotes angiogenic sprouting. May have potent implications in lung endothelial cell-leukocyte interactions. In Mus musculus (Mouse), this protein is Endothelial cell-specific molecule 1 (Esm1).